Reading from the N-terminus, the 376-residue chain is Queuine tRNA-ribosyltransferase (376 aa).

Residue Asp-93 is the Proton acceptor of the active site. Residues 93–97 (DSGGF), Asp-147, Gln-190, and Gly-217 contribute to the substrate site. Residues 248–254 (GVGTPDD) are RNA binding. The Nucleophile role is filled by Asp-267. The RNA binding; important for wobble base 34 recognition stretch occupies residues 272–276 (TRSGR).

It belongs to the queuine tRNA-ribosyltransferase family. Homodimer. Within each dimer, one monomer is responsible for RNA recognition and catalysis, while the other monomer binds to the replacement base PreQ1.

It carries out the reaction 7-aminomethyl-7-carbaguanine + guanosine(34) in tRNA = 7-aminomethyl-7-carbaguanosine(34) in tRNA + guanine. It participates in tRNA modification; tRNA-queuosine biosynthesis. Its function is as follows. Catalyzes the base-exchange of a guanine (G) residue with the queuine precursor 7-aminomethyl-7-deazaguanine (PreQ1) at position 34 (anticodon wobble position) in tRNAs with GU(N) anticodons (tRNA-Asp, -Asn, -His and -Tyr). Catalysis occurs through a double-displacement mechanism. The nucleophile active site attacks the C1' of nucleotide 34 to detach the guanine base from the RNA, forming a covalent enzyme-RNA intermediate. The proton acceptor active site deprotonates the incoming PreQ1, allowing a nucleophilic attack on the C1' of the ribose to form the product. After dissociation, two additional enzymatic reactions on the tRNA convert PreQ1 to queuine (Q), resulting in the hypermodified nucleoside queuosine (7-(((4,5-cis-dihydroxy-2-cyclopenten-1-yl)amino)methyl)-7-deazaguanosine). The protein is Queuine tRNA-ribosyltransferase of Rhizobium meliloti (strain 1021) (Ensifer meliloti).